A 421-amino-acid chain; its full sequence is D-amino acid dehydrogenase (421 aa).

3–17 (VLVLGGGVVGVTSAY) contacts FAD.

It belongs to the DadA oxidoreductase family. It depends on FAD as a cofactor.

It carries out the reaction a D-alpha-amino acid + A + H2O = a 2-oxocarboxylate + AH2 + NH4(+). It functions in the pathway amino-acid degradation; D-alanine degradation; NH(3) and pyruvate from D-alanine: step 1/1. Functionally, oxidative deamination of D-amino acids. The protein is D-amino acid dehydrogenase of Methylobacterium sp. (strain 4-46).